Here is a 126-residue protein sequence, read N- to C-terminus: Histone H2B type 1-M (126 aa).

The segment at 1–36 is disordered; that stretch reads MPEPVKSAPVPKKGSKKAINKAQKKDGKKRKRSRKE. Pro-2 carries the N-acetylproline modification. At Glu-3 the chain carries ADP-ribosyl glutamic acid. Lys-6 is modified (N6-(2-hydroxyisobutyryl)lysine; alternate). Lys-6 carries the post-translational modification N6-(beta-hydroxybutyryl)lysine; alternate. Lys-6 bears the N6-acetyllysine; alternate mark. An N6-butyryllysine; alternate modification is found at Lys-6. Lys-6 carries the N6-crotonyllysine; alternate modification. An N6-lactoyllysine; alternate modification is found at Lys-6. Lys-6 participates in a covalent cross-link: Glycyl lysine isopeptide (Lys-Gly) (interchain with G-Cter in SUMO2); alternate. Ser-7 bears the ADP-ribosylserine mark. N6-(beta-hydroxybutyryl)lysine; alternate is present on Lys-12. An N6-acetyllysine; alternate mark is found at Lys-12 and Lys-13. N6-crotonyllysine; alternate occurs at positions 12 and 13. Lys-12 bears the N6-lactoyllysine; alternate mark. N6-(2-hydroxyisobutyryl)lysine; alternate is present on Lys-13. A Phosphoserine; by STK4/MST1 modification is found at Ser-15. An N6-acetyllysine; alternate mark is found at Lys-16, Lys-17, Lys-21, and Lys-24. An N6-crotonyllysine; alternate mark is found at Lys-16, Lys-17, Lys-21, and Lys-24. Residues Lys-16, Lys-17, Lys-21, and Lys-24 each carry the N6-lactoyllysine; alternate modification. N6-(beta-hydroxybutyryl)lysine; alternate is present on residues Lys-17 and Lys-21. An N6-glutaryllysine; alternate modification is found at Lys-17. An N6-(2-hydroxyisobutyryl)lysine; alternate mark is found at Lys-21 and Lys-24. Lys-21 carries the N6-butyryllysine; alternate modification. A Glycyl lysine isopeptide (Lys-Gly) (interchain with G-Cter in SUMO2); alternate cross-link involves residue Lys-21. Residue Lys-25 is modified to N6-(2-hydroxyisobutyryl)lysine. The residue at position 35 (Lys-35) is an N6-(2-hydroxyisobutyryl)lysine; alternate. Position 35 is an N6-(beta-hydroxybutyryl)lysine; alternate (Lys-35). The residue at position 35 (Lys-35) is an N6-crotonyllysine; alternate. N6-glutaryllysine; alternate is present on Lys-35. Lys-35 is modified (N6-succinyllysine; alternate). Residue Lys-35 forms a Glycyl lysine isopeptide (Lys-Gly) (interchain with G-Cter in ubiquitin); alternate linkage. Glu-36 is modified (polyADP-ribosyl glutamic acid). The residue at position 37 (Ser-37) is a Phosphoserine; by AMPK. An N6-(2-hydroxyisobutyryl)lysine; alternate mark is found at Lys-44, Lys-47, and Lys-58. An N6-lactoyllysine; alternate modification is found at Lys-44. N6-glutaryllysine; alternate is present on residues Lys-44 and Lys-47. The residue at position 47 (Lys-47) is an N6-methyllysine; alternate. Lys-58 carries the N6,N6-dimethyllysine; alternate modification. Arg-80 is modified (dimethylated arginine). Position 86 is an N6-(2-hydroxyisobutyryl)lysine; alternate (Lys-86). The residue at position 86 (Lys-86) is an N6-(beta-hydroxybutyryl)lysine; alternate. Residue Lys-86 is modified to N6-acetyllysine; alternate. An N6-lactoyllysine; alternate modification is found at Lys-86. An N6,N6,N6-trimethyllysine; alternate modification is found at Lys-86. 2 positions are modified to omega-N-methylarginine: Arg-87 and Arg-93. Lys-109 carries the N6-(2-hydroxyisobutyryl)lysine; alternate modification. Position 109 is an N6-lactoyllysine; alternate (Lys-109). Position 109 is an N6-glutaryllysine; alternate (Lys-109). N6-methyllysine; alternate is present on Lys-109. O-linked (GlcNAc) serine glycosylation is present at Ser-113. A Phosphothreonine modification is found at Thr-116. Lys-117 and Lys-121 each carry N6-(2-hydroxyisobutyryl)lysine; alternate. Residues Lys-117 and Lys-121 each carry the N6-(beta-hydroxybutyryl)lysine; alternate modification. An N6-lactoyllysine; alternate mark is found at Lys-117 and Lys-121. 2 positions are modified to N6-glutaryllysine; alternate: Lys-117 and Lys-121. Residues Lys-117 and Lys-121 each carry the N6-succinyllysine; alternate modification. Position 117 is an N6-malonyllysine; alternate (Lys-117). Lys-117 carries the post-translational modification N6-methylated lysine; alternate. A Glycyl lysine isopeptide (Lys-Gly) (interchain with G-Cter in ubiquitin); alternate cross-link involves residue Lys-121.

Belongs to the histone H2B family. In terms of assembly, the nucleosome is a histone octamer containing two molecules each of H2A, H2B, H3 and H4 assembled in one H3-H4 heterotetramer and two H2A-H2B heterodimers. The octamer wraps approximately 147 bp of DNA. In terms of processing, monoubiquitination at Lys-35 (H2BK34Ub) by the MSL1/MSL2 dimer is required for histone H3 'Lys-4' (H3K4me) and 'Lys-79' (H3K79me) methylation and transcription activation at specific gene loci, such as HOXA9 and MEIS1 loci. Similarly, monoubiquitination at Lys-121 (H2BK120Ub) by the RNF20/40 complex gives a specific tag for epigenetic transcriptional activation and is also prerequisite for histone H3 'Lys-4' and 'Lys-79' methylation. It also functions cooperatively with the FACT dimer to stimulate elongation by RNA polymerase II. H2BK120Ub also acts as a regulator of mRNA splicing: deubiquitination by USP49 is required for efficient cotranscriptional splicing of a large set of exons. Post-translationally, phosphorylation at Ser-37 (H2BS36ph) by AMPK in response to stress promotes transcription. Phosphorylated on Ser-15 (H2BS14ph) by STK4/MST1 during apoptosis; which facilitates apoptotic chromatin condensation. Also phosphorylated on Ser-15 in response to DNA double strand breaks (DSBs), and in correlation with somatic hypermutation and immunoglobulin class-switch recombination. GlcNAcylation at Ser-113 promotes monoubiquitination of Lys-121. It fluctuates in response to extracellular glucose, and associates with transcribed genes. In terms of processing, ADP-ribosylated by PARP1 or PARP2 on Ser-7 (H2BS6ADPr) in response to DNA damage. H2BS6ADPr promotes recruitment of CHD1L. Mono-ADP-ribosylated on Glu-3 (H2BE2ADPr) by PARP3 in response to single-strand breaks. Poly ADP-ribosylation on Glu-36 (H2BE35ADPr) by PARP1 regulates adipogenesis: it inhibits phosphorylation at Ser-37 (H2BS36ph), thereby blocking expression of pro-adipogenetic genes. Post-translationally, crotonylation (Kcr) is specifically present in male germ cells and marks testis-specific genes in post-meiotic cells, including X-linked genes that escape sex chromosome inactivation in haploid cells. Crotonylation marks active promoters and enhancers and confers resistance to transcriptional repressors. It is also associated with post-meiotically activated genes on autosomes. Lactylated in macrophages by EP300/P300 by using lactoyl-CoA directly derived from endogenous or exogenous lactate, leading to stimulates gene transcription.

It is found in the nucleus. The protein localises to the chromosome. Functionally, core component of nucleosome. Nucleosomes wrap and compact DNA into chromatin, limiting DNA accessibility to the cellular machineries which require DNA as a template. Histones thereby play a central role in transcription regulation, DNA repair, DNA replication and chromosomal stability. DNA accessibility is regulated via a complex set of post-translational modifications of histones, also called histone code, and nucleosome remodeling. In Homo sapiens (Human), this protein is Histone H2B type 1-M.